The primary structure comprises 351 residues: UPF0421 protein BC_2748 (351 aa).

The next 4 helical transmembrane spans lie at 19–39 (IAVF…IFAV), 74–94 (FTFF…FTIV), 109–129 (TLTA…AFLI), and 131–151 (LATT…IFPP).

It belongs to the UPF0421 family.

It localises to the cell membrane. The protein is UPF0421 protein BC_2748 of Bacillus cereus (strain ATCC 14579 / DSM 31 / CCUG 7414 / JCM 2152 / NBRC 15305 / NCIMB 9373 / NCTC 2599 / NRRL B-3711).